A 456-amino-acid chain; its full sequence is UDP-N-acetylmuramate--L-alanine ligase (456 aa).

Residue 114–120 participates in ATP binding; it reads GTHGKTT.

It belongs to the MurCDEF family.

It localises to the cytoplasm. It catalyses the reaction UDP-N-acetyl-alpha-D-muramate + L-alanine + ATP = UDP-N-acetyl-alpha-D-muramoyl-L-alanine + ADP + phosphate + H(+). It functions in the pathway cell wall biogenesis; peptidoglycan biosynthesis. Its function is as follows. Cell wall formation. The protein is UDP-N-acetylmuramate--L-alanine ligase of Porphyromonas gingivalis (strain ATCC 33277 / DSM 20709 / CIP 103683 / JCM 12257 / NCTC 11834 / 2561).